Reading from the N-terminus, the 289-residue chain is MHKHHNGLKTAALFGVLWAVLLALGALIGAGTRSSAPIWIMALVGVGTTFYGYWNSDKIAIRSMQAFEVSEAQAPQLYQIVRELSARANQPMPRIYVSPTMNPNAFATGRNPQNAAVCCTEGILQLLDARELRGVLGHELMHVYNRDILTSSVAAAVAGVITSVGQMLLFFGGGDRRNANPLAMIAMALLAPFAASLIQMAISRTREYDADEDGSQLTGDPLALASALAKIERGVTMVPLPPDQRLVNASHLMIANPFRGGAMNKLFATHPPMRDRIARLERMAGRPLQ.

A run of 2 helical transmembrane segments spans residues 11–31 and 36–54; these read AALF…IGAG and APIW…YGYW. Histidine 138 provides a ligand contact to Zn(2+). Glutamate 139 is an active-site residue. Zn(2+) is bound at residue histidine 142. The next 2 membrane-spanning stretches (helical) occupy residues 153–173 and 182–202; these read VAAA…FFGG and LAMI…QMAI. Glutamate 207 is a binding site for Zn(2+).

The protein belongs to the peptidase M48B family. Zn(2+) is required as a cofactor.

It is found in the cell membrane. The protein is Protease HtpX homolog of Pseudarthrobacter chlorophenolicus (strain ATCC 700700 / DSM 12829 / CIP 107037 / JCM 12360 / KCTC 9906 / NCIMB 13794 / A6) (Arthrobacter chlorophenolicus).